The following is a 207-amino-acid chain: Protein GrpE (207 aa).

Residues 1–11 are compositionally biased toward basic and acidic residues; sequence MTETDGQKDNN. A disordered region spans residues 1-40; that stretch reads MTETDGQKDNNQDTAQAAADPVVSKPYIMPDDPEEGSNEA.

The protein belongs to the GrpE family. In terms of assembly, homodimer.

Its subcellular location is the cytoplasm. Participates actively in the response to hyperosmotic and heat shock by preventing the aggregation of stress-denatured proteins, in association with DnaK and GrpE. It is the nucleotide exchange factor for DnaK and may function as a thermosensor. Unfolded proteins bind initially to DnaJ; upon interaction with the DnaJ-bound protein, DnaK hydrolyzes its bound ATP, resulting in the formation of a stable complex. GrpE releases ADP from DnaK; ATP binding to DnaK triggers the release of the substrate protein, thus completing the reaction cycle. Several rounds of ATP-dependent interactions between DnaJ, DnaK and GrpE are required for fully efficient folding. The sequence is that of Protein GrpE from Rhodopseudomonas palustris (strain ATCC BAA-98 / CGA009).